An 860-amino-acid polypeptide reads, in one-letter code: Glucans biosynthesis glucosyltransferase H (860 aa).

6 consecutive transmembrane segments (helical) span residues 146-166, 200-220, 519-539, 576-596, 610-630, and 686-706; these read ILLI…KGIL, ILLL…TALM, VFLT…FLVL, LFST…ILIW, TVSM…RMLF, and FLWW…VSVI.

Belongs to the glycosyltransferase 2 family. OpgH subfamily.

Its subcellular location is the cell inner membrane. It participates in glycan metabolism; osmoregulated periplasmic glucan (OPG) biosynthesis. Functionally, involved in the biosynthesis of osmoregulated periplasmic glucans (OPGs). This chain is Glucans biosynthesis glucosyltransferase H, found in Pseudomonas savastanoi pv. phaseolicola (strain 1448A / Race 6) (Pseudomonas syringae pv. phaseolicola (strain 1448A / Race 6)).